The sequence spans 589 residues: Polypeptide N-acetylgalactosaminyltransferase 4 (589 aa).

The Cytoplasmic portion of the chain corresponds to 1–11; it reads MLPRMLKMKTV. The helical; Signal-anchor for type II membrane protein transmembrane segment at 12–31 threads the bilayer; it reads GTVLAVIWLFGLAFIYVQST. The Lumenal segment spans residues 32 to 589; it reads SSSLRPPGRH…WIFEKLDTYE (558 aa). The tract at residues 33–73 is disordered; the sequence is SSLRPPGRHPPPLPQLDPLIPQNPPQNDEIRPKKSAPPIPT. 5 cysteine pairs are disulfide-bonded: Cys140–Cys369, Cys360–Cys438, Cys471–Cys488, Cys514–Cys531, and Cys553–Cys571. Positions 150 to 255 are catalytic subdomain A; sequence MQPTTVIITY…QKWLEPLLAR (106 aa). Substrate-binding residues include Asp191 and Arg216. Residue Asp239 participates in Mn(2+) binding. Ser240 contacts substrate. His241 provides a ligand contact to Mn(2+). The catalytic subdomain B stretch occupies residues 315-377; it reads PIRSPTMAGG…PCSRVGHVFR (63 aa). Position 346 (Trp346) interacts with substrate. His374 is a Mn(2+) binding site. Residues Arg377, His380, and Tyr382 each contribute to the substrate site. A Ricin B-type lectin domain is found at 458 to 589; it reads TPGKSFQMKI…WIFEKLDTYE (132 aa). A glycan (N-linked (GlcNAc...) asparagine) is linked at Asn523.

The protein belongs to the glycosyltransferase 2 family. GalNAc-T subfamily. It depends on Mn(2+) as a cofactor.

The protein localises to the golgi apparatus membrane. It carries out the reaction L-seryl-[protein] + UDP-N-acetyl-alpha-D-galactosamine = a 3-O-[N-acetyl-alpha-D-galactosaminyl]-L-seryl-[protein] + UDP + H(+). The enzyme catalyses L-threonyl-[protein] + UDP-N-acetyl-alpha-D-galactosamine = a 3-O-[N-acetyl-alpha-D-galactosaminyl]-L-threonyl-[protein] + UDP + H(+). The protein operates within protein modification; protein glycosylation. In terms of biological role, catalyzes the initial reaction in O-linked oligosaccharide biosynthesis, the transfer of an N-acetyl-D-galactosamine residue to a serine or threonine residue on the protein receptor. This chain is Polypeptide N-acetylgalactosaminyltransferase 4 (gly-4), found in Caenorhabditis elegans.